Here is a 175-residue protein sequence, read N- to C-terminus: NADH-ubiquinone oxidoreductase chain 6 (175 aa).

Helical transmembrane passes span Met1–Ser21, Pro25–Gly45, Leu51–Ile71, Val87–Phe107, Glu112–Phe132, and Tyr148–Ile168.

Belongs to the complex I subunit 6 family. Core subunit of respiratory chain NADH dehydrogenase (Complex I) which is composed of 45 different subunits.

Its subcellular location is the mitochondrion inner membrane. The catalysed reaction is a ubiquinone + NADH + 5 H(+)(in) = a ubiquinol + NAD(+) + 4 H(+)(out). Functionally, core subunit of the mitochondrial membrane respiratory chain NADH dehydrogenase (Complex I) which catalyzes electron transfer from NADH through the respiratory chain, using ubiquinone as an electron acceptor. Essential for the catalytic activity and assembly of complex I. The chain is NADH-ubiquinone oxidoreductase chain 6 (MT-ND6) from Loxodonta africana (African elephant).